Reading from the N-terminus, the 297-residue chain is Vacuolar protein sorting-associated protein 26C (297 aa).

This sequence belongs to the VPS26 family. In terms of assembly, component of the commander complex that is essential for endosomal recycling of transmembrane cargos; the commander complex is composed of the CCC subcomplex and the retriever subcomplex. Component of the heterotrimeric retriever complex consisting of VPS26C, VPS29 and VPS35L; within the complex interacts with VPS35L. Interacts with SNX17 (via C-terminus); the interaction is direct and associates SNX17 with the retriever complex. Interacts with SNX31; the interaction is direct. Ubiquitously expressed.

The protein resides in the endosome. Its function is as follows. Component of the commander complex that is essential for endosomal recycling of transmembrane cargos; the commander complex is composed of the CCC subcomplex and the retriever subcomplex. Component of the retriever complex, which is a heterotrimeric complex related to retromer cargo-selective complex (CSC) and essential for retromer-independent retrieval and recycling of numerous cargos such as integrin alpha-5/beta-1 (ITGA5:ITGB1). The recruitment of the retriever complex to the endosomal membrane involves CCC and WASH complexes. In the endosomes, drives the retriever and recycling of NxxY-motif-containing cargo proteins by coupling to SNX17, a cargo essential for the homeostatic maintenance of numerous cell surface proteins associated with processes that include cell migration, cell adhesion, nutrient supply and cell signaling. (Microbial infection) The heterotrimeric retriever complex, in collaboration with the CCC complex, mediates the exit of human papillomavirus to the cell surface. The polypeptide is Vacuolar protein sorting-associated protein 26C (Homo sapiens (Human)).